The sequence spans 342 residues: Eukaryotic translation initiation factor 3 subunit F (342 aa).

The region spanning 30-166 (VAIQPQAVFS…SRTYISAPIG (137 aa)) is the MPN domain. The interval 310–342 (TDALAGDGQKDGGDRKQGGDRRNKGRQQRTQEA) is disordered. A compositionally biased stretch (basic and acidic residues) spans 317–331 (GQKDGGDRKQGGDRR).

The protein belongs to the eIF-3 subunit F family. In terms of assembly, component of the eukaryotic translation initiation factor 3 (eIF-3) complex.

It localises to the cytoplasm. Functionally, component of the eukaryotic translation initiation factor 3 (eIF-3) complex, which is involved in protein synthesis of a specialized repertoire of mRNAs and, together with other initiation factors, stimulates binding of mRNA and methionyl-tRNAi to the 40S ribosome. The eIF-3 complex specifically targets and initiates translation of a subset of mRNAs involved in cell proliferation. The protein is Eukaryotic translation initiation factor 3 subunit F of Phaeosphaeria nodorum (strain SN15 / ATCC MYA-4574 / FGSC 10173) (Glume blotch fungus).